The primary structure comprises 299 residues: Sulfate adenylyltransferase subunit 2 (299 aa).

Belongs to the PAPS reductase family. CysD subfamily. As to quaternary structure, sulfate-activating enzymes, NodP and NodQ, may be physically associated.

It carries out the reaction sulfate + ATP + H(+) = adenosine 5'-phosphosulfate + diphosphate. Proposed to provide activated sulfate for transfer to nod factor. The chain is Sulfate adenylyltransferase subunit 2 (nodP) from Rhizobium tropici.